A 116-amino-acid chain; its full sequence is MEKMVRDIGLRIQPPAEKCDDPKCPWHGHLKIHGRVFEGIVISDKPRKTVTVERQYYHYLKKYERYELRRSRIHAHNPPCINAKVGDRVLIAETRPLSKTKHFVVVAVLERAEERR.

It belongs to the universal ribosomal protein uS17 family. As to quaternary structure, part of the 30S ribosomal subunit.

Functionally, one of the primary rRNA binding proteins, it binds specifically to the 5'-end of 16S ribosomal RNA. The sequence is that of Small ribosomal subunit protein uS17 from Pyrococcus horikoshii (strain ATCC 700860 / DSM 12428 / JCM 9974 / NBRC 100139 / OT-3).